The chain runs to 370 residues: Peptide chain release factor 2 (370 aa).

Gln252 is modified (N5-methylglutamine).

The protein belongs to the prokaryotic/mitochondrial release factor family. In terms of processing, methylated by PrmC. Methylation increases the termination efficiency of RF2.

The protein localises to the cytoplasm. Its function is as follows. Peptide chain release factor 2 directs the termination of translation in response to the peptide chain termination codons UGA and UAA. This chain is Peptide chain release factor 2, found in Mycobacterium avium (strain 104).